A 429-amino-acid chain; its full sequence is Lysophosphatidic acid phosphatase type 6 (429 aa).

Residues 1 to 32 constitute a mitochondrion transit peptide; that stretch reads MISRVFKLRMWAPVGVLTSLTYCLHQRRVALA. The interval 58–169 is substrate binding; it reads RHGARSPLKP…VFIRSTNIYR (112 aa). His59 functions as the Nucleophile in the catalytic mechanism. Asp336 (proton donor) is an active-site residue.

The protein belongs to the histidine acid phosphatase family. Monomer. As to expression, detected in brain (at protein level).

The protein localises to the mitochondrion. The enzyme catalyses a phosphate monoester + H2O = an alcohol + phosphate. It carries out the reaction 1-(9Z-octadecenoyl)-sn-glycero-3-phosphate + H2O = 1-(9Z-octadecenoyl)-sn-glycerol + phosphate. Hydrolyzes lysophosphatidic acid (LPA) containing a medium length fatty acid chain to the corresponding monoacylglycerol. Has highest activity with lysophosphatidic acid containing myristate (C14:0), monounsaturated oleate (C18:1) or palmitate (C16:0), and lower activity with C18:0 and C6:0 lysophosphatidic acid. This Bos taurus (Bovine) protein is Lysophosphatidic acid phosphatase type 6 (ACP6).